Consider the following 270-residue polypeptide: MAEQINESHQRFLQVLMSHGIMESSLVRALHRHCCEVHKVNYMHDNLDDFVGVLNKHLQPLFMKIEKGVGEEDGLTYYALVNRVENDITKMASDYAENELELFRKTMELIIISENGFAPPISILNLADELQSKKMKKKEVEQLLQSFVQDKWLIGRNGEYTLHTRCIMELEHYILNTYQDVAKICNVCHKIAIQCQLCENCGIPLHLQCAGIYFRGIANPLCPNCKESWPHEIPDLSQVSSQGPSHSQAAPVRGRNQRSRNISTVARTSR.

An RING-type; atypical zinc finger spans residues 185 to 226 (CNVCHKIAIQCQLCENCGIPLHLQCAGIYFRGIANPLCPNCK). The tract at residues 236-270 (LSQVSSQGPSHSQAAPVRGRNQRSRNISTVARTSR) is disordered. Composition is skewed to polar residues over residues 237-248 (SQVSSQGPSHSQ) and 259-270 (SRNISTVARTSR).

It belongs to the NSE1 family. Component of the SMC5-SMC6 complex.

The protein localises to the nucleus. The protein resides in the chromosome. It is found in the telomere. The enzyme catalyses S-ubiquitinyl-[E2 ubiquitin-conjugating enzyme]-L-cysteine + [acceptor protein]-L-lysine = [E2 ubiquitin-conjugating enzyme]-L-cysteine + N(6)-ubiquitinyl-[acceptor protein]-L-lysine.. RING-type zinc finger-containing E3 ubiquitin ligase that assembles with melanoma antigen protein (MAGE) to catalyze the direct transfer of ubiquitin from E2 ubiquitin-conjugating enzyme to a specific substrate. Within MAGE-RING ubiquitin ligase complex, MAGE stimulates and specifies ubiquitin ligase activity likely through recruitment and/or stabilization of the E2 ubiquitin-conjugating enzyme at the E3:substrate complex. Involved in maintenance of genome integrity, DNA damage response and DNA repair. The polypeptide is Non-structural maintenance of chromosomes element 1 homolog (nsmce1) (Xenopus tropicalis (Western clawed frog)).